A 144-amino-acid chain; its full sequence is Small ribosomal subunit protein eS19A (144 aa).

The tract at residues 83–102 is disordered; it reads VNRGMRPSHHRDGSGSVQRK.

It belongs to the eukaryotic ribosomal protein eS19 family. As to quaternary structure, component of the small ribosomal subunit (SSU). Mature yeast ribosomes consist of a small (40S) and a large (60S) subunit. The 40S small subunit contains 1 molecule of ribosomal RNA (18S rRNA) and at least 33 different proteins. The large 60S subunit contains 3 rRNA molecules (25S, 5.8S and 5S rRNA) and at least 46 different proteins.

Its subcellular location is the cytoplasm. The protein localises to the nucleus. The protein resides in the nucleolus. Functionally, component of the ribosome, a large ribonucleoprotein complex responsible for the synthesis of proteins in the cell. The small ribosomal subunit (SSU) binds messenger RNAs (mRNAs) and translates the encoded message by selecting cognate aminoacyl-transfer RNA (tRNA) molecules. The large subunit (LSU) contains the ribosomal catalytic site termed the peptidyl transferase center (PTC), which catalyzes the formation of peptide bonds, thereby polymerizing the amino acids delivered by tRNAs into a polypeptide chain. The nascent polypeptides leave the ribosome through a tunnel in the LSU and interact with protein factors that function in enzymatic processing, targeting, and the membrane insertion of nascent chains at the exit of the ribosomal tunnel. eS19 is required for proper maturation of the small (40S) ribosomal subunit. Binds to 40S pre-ribosomal particles, probably required after association of NOC4 but before association of ENP1, TSR1 and RIO2 with 20/21S pre-rRNA. The protein is Small ribosomal subunit protein eS19A (rps1901) of Schizosaccharomyces pombe (strain 972 / ATCC 24843) (Fission yeast).